The sequence spans 332 residues: 2,3-diketo-L-gulonate reductase (332 aa).

Residue H44 is the Proton donor of the active site. Residues 168–174, 224–225, and 304–306 contribute to the NAD(+) site; these read ITMVDMS, WK, and GHE.

The protein belongs to the LDH2/MDH2 oxidoreductase family. DlgD subfamily. In terms of assembly, homodimer.

It is found in the cytoplasm. It carries out the reaction 3-dehydro-L-gulonate + NAD(+) = 2,3-dioxo-L-gulonate + NADH + H(+). It catalyses the reaction 3-dehydro-L-gulonate + NADP(+) = 2,3-dioxo-L-gulonate + NADPH + H(+). Catalyzes the reduction of 2,3-diketo-L-gulonate in the presence of NADH, to form 3-keto-L-gulonate. This chain is 2,3-diketo-L-gulonate reductase, found in Shigella boydii serotype 4 (strain Sb227).